The sequence spans 626 residues: Receptor-like protein 4 (626 aa).

The signal sequence occupies residues 1–22; that stretch reads MMLRFILASLLLSSFSLYSSLA. At 23-549 the chain is on the extracellular side; that stretch reads RPAPYALRIS…CGPHLSSGAK (527 aa). 4 N-linked (GlcNAc...) asparagine glycosylation sites follow: N61, N282, N333, and N417. LRR repeat units lie at residues 420-444, 445-468, 470-492, and 493-516; these read RWFIDGLDLDNQGLKGFLPNDISKL, KHLQSINLSENNIRGGIPASLGSV, SLEVLDLSYNSFNGSIPETLGEL, and TSLRILNLNGNSLSGKVPAAVGGR. N451 and N482 each carry an N-linked (GlcNAc...) asparagine glycan. N524 carries an N-linked (GlcNAc...) asparagine glycan. Residues 550–570 traverse the membrane as a helical segment; that stretch reads IGIAFGVSLAFLLIVACAMIW. Topologically, residues 571–626 are cytoplasmic; that stretch reads WKRRQNILRAQQIAARGAPYAKKRTHVSHDIQMSRHGHNNHGQARTAVENGPSLLS. The tract at residues 603-626 is disordered; sequence MSRHGHNNHGQARTAVENGPSLLS.

Belongs to the RLP family.

The protein resides in the cell membrane. The sequence is that of Receptor-like protein 4 from Arabidopsis thaliana (Mouse-ear cress).